The sequence spans 456 residues: E3 ubiquitin-protein ligase RNF25 (456 aa).

In terms of domain architecture, RWD spans 18 to 127 (SEVEVLESIY…EKGKEILTDN (110 aa)). Zn(2+) contacts are provided by cysteine 134, cysteine 137, cysteine 152, histidine 154, histidine 157, cysteine 160, cysteine 195, and cysteine 198. The RING-type zinc finger occupies 134–199 (CVICLYGFQE…AVGVQCPVCR (66 aa)). A disordered region spans residues 269 to 456 (LEPESAVDVS…PLGLESEEGS (188 aa)). The segment covering 288–332 (SAEQSTSLADQSTLPTSLPMTTQYTYEKTSGAGPNQQRPGETQKS) has biased composition (polar residues). Composition is skewed to basic and acidic residues over residues 364–388 (SEIH…EPRN) and 410–421 (RTRDCARWERSK).

This sequence belongs to the RNF25 family. In terms of assembly, interacts with UBE2D2, and may also interact with UBE2E1 and UBE2E3. Interacts with RELA/p65. Post-translationally, ubiquitinated; autoubiquitinated. In terms of tissue distribution, ubiquitous.

It is found in the cytoplasm. The catalysed reaction is S-ubiquitinyl-[E2 ubiquitin-conjugating enzyme]-L-cysteine + [acceptor protein]-L-lysine = [E2 ubiquitin-conjugating enzyme]-L-cysteine + N(6)-ubiquitinyl-[acceptor protein]-L-lysine.. It participates in protein modification; protein ubiquitination. In terms of biological role, E3 ubiquitin-protein ligase that plays a key role in the RNF14-RNF25 translation quality control pathway, a pathway that takes place when a ribosome has stalled during translation, and which promotes ubiquitination and degradation of translation factors on stalled ribosomes. Catalyzes ubiquitination of RPS27A in response to ribosome collisions, promoting activation of RNF14. RNF25 catalyzes ubiquitination of other ribosomal proteins on stalled ribosomes, such as RPL0, RPL1, RPL12, RPS13 and RPS17. Also involved in ubiquitination and degradation of stalled ETF1/eRF1. Independently of its function in the response to stalled ribosomes, mediates ubiquitination and subsequent proteasomal degradation of NKD2. May also stimulate transcription mediated by NF-kappa-B via its interaction with RELA/p65. The sequence is that of E3 ubiquitin-protein ligase RNF25 from Mus musculus (Mouse).